A 276-amino-acid chain; its full sequence is Undecaprenyl-diphosphatase (276 aa).

The next 5 membrane-spanning stretches (helical) occupy residues 84-104, 115-135, 188-208, 222-242, and 250-270; these read YRLGWYVIIGTIPICILGLFF, LWVVVTALVVFSGVIALAEYV, FGFLLAIPAVFASGLFSLPDA, QLLVATLIAFVLGLTAVAWLL, and MYWFVGYRVLVGTGMLVLLAT.

Belongs to the UppP family.

Its subcellular location is the cell membrane. It carries out the reaction di-trans,octa-cis-undecaprenyl diphosphate + H2O = di-trans,octa-cis-undecaprenyl phosphate + phosphate + H(+). Catalyzes the dephosphorylation of undecaprenyl diphosphate (UPP). Confers resistance to bacitracin. This chain is Undecaprenyl-diphosphatase, found in Mycobacterium tuberculosis (strain ATCC 25177 / H37Ra).